A 360-amino-acid chain; its full sequence is Phospho-N-acetylmuramoyl-pentapeptide-transferase (360 aa).

Transmembrane regions (helical) follow at residues Gly27–Leu47, Thr71–Ala91, Leu93–Phe113, Phe128–Ile148, Phe168–Gly188, Gly199–Ser219, Leu239–Pro259, Ala262–Val282, Ile288–Val308, and Gln337–Leu357.

It belongs to the glycosyltransferase 4 family. MraY subfamily. Mg(2+) is required as a cofactor.

The protein resides in the cell inner membrane. It catalyses the reaction UDP-N-acetyl-alpha-D-muramoyl-L-alanyl-gamma-D-glutamyl-meso-2,6-diaminopimeloyl-D-alanyl-D-alanine + di-trans,octa-cis-undecaprenyl phosphate = di-trans,octa-cis-undecaprenyl diphospho-N-acetyl-alpha-D-muramoyl-L-alanyl-D-glutamyl-meso-2,6-diaminopimeloyl-D-alanyl-D-alanine + UMP. Its pathway is cell wall biogenesis; peptidoglycan biosynthesis. Its function is as follows. Catalyzes the initial step of the lipid cycle reactions in the biosynthesis of the cell wall peptidoglycan: transfers peptidoglycan precursor phospho-MurNAc-pentapeptide from UDP-MurNAc-pentapeptide onto the lipid carrier undecaprenyl phosphate, yielding undecaprenyl-pyrophosphoryl-MurNAc-pentapeptide, known as lipid I. In Brucella anthropi (strain ATCC 49188 / DSM 6882 / CCUG 24695 / JCM 21032 / LMG 3331 / NBRC 15819 / NCTC 12168 / Alc 37) (Ochrobactrum anthropi), this protein is Phospho-N-acetylmuramoyl-pentapeptide-transferase.